A 121-amino-acid chain; its full sequence is Protein TCL1B5 (121 aa).

It belongs to the TCL1 family.

This Mus musculus (Mouse) protein is Protein TCL1B5 (Tcl1b5).